The chain runs to 571 residues: Proline--tRNA ligase (571 aa).

Belongs to the class-II aminoacyl-tRNA synthetase family. ProS type 1 subfamily. As to quaternary structure, homodimer.

The protein resides in the cytoplasm. The catalysed reaction is tRNA(Pro) + L-proline + ATP = L-prolyl-tRNA(Pro) + AMP + diphosphate. In terms of biological role, catalyzes the attachment of proline to tRNA(Pro) in a two-step reaction: proline is first activated by ATP to form Pro-AMP and then transferred to the acceptor end of tRNA(Pro). As ProRS can inadvertently accommodate and process non-cognate amino acids such as alanine and cysteine, to avoid such errors it has two additional distinct editing activities against alanine. One activity is designated as 'pretransfer' editing and involves the tRNA(Pro)-independent hydrolysis of activated Ala-AMP. The other activity is designated 'posttransfer' editing and involves deacylation of mischarged Ala-tRNA(Pro). The misacylated Cys-tRNA(Pro) is not edited by ProRS. The protein is Proline--tRNA ligase of Pseudomonas fluorescens (strain ATCC BAA-477 / NRRL B-23932 / Pf-5).